Consider the following 219-residue polypeptide: Pyridoxine/pyridoxamine 5'-phosphate oxidase (219 aa).

Substrate-binding positions include 13–16 (RVEY) and Lys-76. Residues 71–76 (RSVLCK), 86–87 (FT), Lys-93, and Gln-115 contribute to the FMN site. Tyr-133, Arg-137, and Ser-141 together coordinate substrate. Residues 150–151 (QS) and Trp-196 each bind FMN. Substrate is bound at residue 202–204 (RVH). Arg-206 contacts FMN.

The protein belongs to the pyridoxamine 5'-phosphate oxidase family. In terms of assembly, homodimer. The cofactor is FMN.

It catalyses the reaction pyridoxamine 5'-phosphate + O2 + H2O = pyridoxal 5'-phosphate + H2O2 + NH4(+). The enzyme catalyses pyridoxine 5'-phosphate + O2 = pyridoxal 5'-phosphate + H2O2. Its pathway is cofactor metabolism; pyridoxal 5'-phosphate salvage; pyridoxal 5'-phosphate from pyridoxamine 5'-phosphate: step 1/1. It functions in the pathway cofactor metabolism; pyridoxal 5'-phosphate salvage; pyridoxal 5'-phosphate from pyridoxine 5'-phosphate: step 1/1. Its function is as follows. Catalyzes the oxidation of either pyridoxine 5'-phosphate (PNP) or pyridoxamine 5'-phosphate (PMP) into pyridoxal 5'-phosphate (PLP). This is Pyridoxine/pyridoxamine 5'-phosphate oxidase from Mycobacterium leprae (strain TN).